Reading from the N-terminus, the 236-residue chain is Leucyl/phenylalanyl-tRNA--protein transferase (236 aa).

It belongs to the L/F-transferase family.

The protein localises to the cytoplasm. The enzyme catalyses N-terminal L-lysyl-[protein] + L-leucyl-tRNA(Leu) = N-terminal L-leucyl-L-lysyl-[protein] + tRNA(Leu) + H(+). It catalyses the reaction N-terminal L-arginyl-[protein] + L-leucyl-tRNA(Leu) = N-terminal L-leucyl-L-arginyl-[protein] + tRNA(Leu) + H(+). It carries out the reaction L-phenylalanyl-tRNA(Phe) + an N-terminal L-alpha-aminoacyl-[protein] = an N-terminal L-phenylalanyl-L-alpha-aminoacyl-[protein] + tRNA(Phe). Its function is as follows. Functions in the N-end rule pathway of protein degradation where it conjugates Leu, Phe and, less efficiently, Met from aminoacyl-tRNAs to the N-termini of proteins containing an N-terminal arginine or lysine. The protein is Leucyl/phenylalanyl-tRNA--protein transferase of Shewanella putrefaciens (strain CN-32 / ATCC BAA-453).